A 189-amino-acid chain; its full sequence is Holliday junction branch migration complex subunit RuvA (189 aa).

Residues 1-63 (MIHALNGKVE…DDGISLYGFL (63 aa)) are domain I. The domain II stretch occupies residues 64-135 (EVIKLKLFEK…ELKDTIKELD (72 aa)). Positions 135–139 (DVSIN) are flexible linker. The domain III stretch occupies residues 140–189 (EKDRKVLEAIEALVTLGFNRNQAKKAVNKVAAKDDKLDDIIKKALRFLSR).

The protein belongs to the RuvA family. As to quaternary structure, homotetramer. Forms an RuvA(8)-RuvB(12)-Holliday junction (HJ) complex. HJ DNA is sandwiched between 2 RuvA tetramers; dsDNA enters through RuvA and exits via RuvB. An RuvB hexamer assembles on each DNA strand where it exits the tetramer. Each RuvB hexamer is contacted by two RuvA subunits (via domain III) on 2 adjacent RuvB subunits; this complex drives branch migration. In the full resolvosome a probable DNA-RuvA(4)-RuvB(12)-RuvC(2) complex forms which resolves the HJ.

The protein resides in the cytoplasm. The RuvA-RuvB-RuvC complex processes Holliday junction (HJ) DNA during genetic recombination and DNA repair, while the RuvA-RuvB complex plays an important role in the rescue of blocked DNA replication forks via replication fork reversal (RFR). RuvA specifically binds to HJ cruciform DNA, conferring on it an open structure. The RuvB hexamer acts as an ATP-dependent pump, pulling dsDNA into and through the RuvAB complex. HJ branch migration allows RuvC to scan DNA until it finds its consensus sequence, where it cleaves and resolves the cruciform DNA. The chain is Holliday junction branch migration complex subunit RuvA from Thermosipho africanus (strain TCF52B).